The primary structure comprises 436 residues: Proline--tRNA ligase (436 aa).

This sequence belongs to the class-II aminoacyl-tRNA synthetase family. ProS type 2 subfamily. As to quaternary structure, homodimer.

The protein localises to the cytoplasm. The enzyme catalyses tRNA(Pro) + L-proline + ATP = L-prolyl-tRNA(Pro) + AMP + diphosphate. In terms of biological role, catalyzes the attachment of proline to tRNA(Pro) in a two-step reaction: proline is first activated by ATP to form Pro-AMP and then transferred to the acceptor end of tRNA(Pro). This chain is Proline--tRNA ligase, found in Neorickettsia sennetsu (strain ATCC VR-367 / Miyayama) (Ehrlichia sennetsu).